The sequence spans 151 residues: SsrA-binding protein (151 aa).

It belongs to the SmpB family.

The protein resides in the cytoplasm. Functionally, required for rescue of stalled ribosomes mediated by trans-translation. Binds to transfer-messenger RNA (tmRNA), required for stable association of tmRNA with ribosomes. tmRNA and SmpB together mimic tRNA shape, replacing the anticodon stem-loop with SmpB. tmRNA is encoded by the ssrA gene; the 2 termini fold to resemble tRNA(Ala) and it encodes a 'tag peptide', a short internal open reading frame. During trans-translation Ala-aminoacylated tmRNA acts like a tRNA, entering the A-site of stalled ribosomes, displacing the stalled mRNA. The ribosome then switches to translate the ORF on the tmRNA; the nascent peptide is terminated with the 'tag peptide' encoded by the tmRNA and targeted for degradation. The ribosome is freed to recommence translation, which seems to be the essential function of trans-translation. The chain is SsrA-binding protein from Chlamydia trachomatis serovar A (strain ATCC VR-571B / DSM 19440 / HAR-13).